A 390-amino-acid chain; its full sequence is Substance-K receptor (390 aa).

At 1–32 (MGTRAIVSDANILSGLESNATGVTAFSMPGWQ) the chain is on the extracellular side. N19 carries N-linked (GlcNAc...) asparagine glycosylation. Residues 33–56 (LALWATAYLALVLVAVTGNATVIW) traverse the membrane as a helical segment. Residues 57–69 (IILAHERMRTVTN) are Cytoplasmic-facing. A helical membrane pass occupies residues 70–90 (YFIINLALADLCMAAFNATFN). Over 91–107 (FIYASHNIWYFGRAFCY) the chain is Extracellular. A disulfide bridge connects residues C106 and C181. Residues 108 to 129 (FQNLFPITAMFVSIYSMTAIAA) form a helical membrane-spanning segment. Residues 130 to 149 (DRYMAIVHPFQPRLSAPSTK) are Cytoplasmic-facing. Residues 150-170 (AIIAGIWLVALALASPQCFYS) traverse the membrane as a helical segment. Topologically, residues 171-196 (TITVDEGATKCVVAWPNDNGGKMLLL) are extracellular. Residues 197-218 (YHLVVFVLIYFLPLLVMFGAYS) traverse the membrane as a helical segment. Residues 219–251 (VIGLTLWKRAVPRHQAHGANLRHLQAKKKFVKA) are Cytoplasmic-facing. A helical transmembrane segment spans residues 252–272 (MVLVVLTFAICWLPYHLYFIL). The Extracellular segment spans residues 273 to 290 (GTFQEDIYYHKFIQQVYL). Residues 291-310 (ALFWLAMSSTMYNPIIYCCL) form a helical membrane-spanning segment. Residues 311-390 (NHRFRSGFRL…PAGPICKAQA (80 aa)) are Cytoplasmic-facing. A lipid anchor (S-palmitoyl cysteine) is attached at C324. The interval 365–390 (HSEATNGQVGSPQDGEPAGPICKAQA) is disordered. Residues 366–375 (SEATNGQVGS) are compositionally biased toward polar residues.

This sequence belongs to the G-protein coupled receptor 1 family.

The protein localises to the cell membrane. This is a receptor for the tachykinin neuropeptide substance K (neurokinin A). It is associated with G proteins that activate a phosphatidylinositol-calcium second messenger system. The rank order of affinity of this receptor to tachykinins is: substance K &gt; neuromedin-K &gt; substance P. In Rattus norvegicus (Rat), this protein is Substance-K receptor (Tacr2).